The following is a 545-amino-acid chain: Membrane protein insertase YidC (545 aa).

Helical transmembrane passes span 350–370, 424–444, 461–481, and 498–518; these read IIGN…AVLY, LPML…FASV, ADPY…QTYL, and PLVF…YWVV.

It belongs to the OXA1/ALB3/YidC family. Type 1 subfamily. In terms of assembly, interacts with the Sec translocase complex via SecD. Specifically interacts with transmembrane segments of nascent integral membrane proteins during membrane integration.

The protein resides in the cell inner membrane. Its function is as follows. Required for the insertion and/or proper folding and/or complex formation of integral membrane proteins into the membrane. Involved in integration of membrane proteins that insert both dependently and independently of the Sec translocase complex, as well as at least some lipoproteins. Aids folding of multispanning membrane proteins. This is Membrane protein insertase YidC from Neisseria gonorrhoeae (strain ATCC 700825 / FA 1090).